We begin with the raw amino-acid sequence, 443 residues long: Probable D-serine dehydratase (443 aa).

K116 carries the N6-(pyridoxal phosphate)lysine modification.

Belongs to the serine/threonine dehydratase family. DsdA subfamily. Pyridoxal 5'-phosphate serves as cofactor.

It catalyses the reaction D-serine = pyruvate + NH4(+). This chain is Probable D-serine dehydratase, found in Bacillus cereus (strain ATCC 14579 / DSM 31 / CCUG 7414 / JCM 2152 / NBRC 15305 / NCIMB 9373 / NCTC 2599 / NRRL B-3711).